The primary structure comprises 495 residues: Cobyric acid synthase (495 aa).

The 194-residue stretch at 253 to 446 (KISIAIVYFP…FHGIFDGSAF (194 aa)) folds into the GATase cobBQ-type domain. C334 serves as the catalytic Nucleophile. H438 is a catalytic residue.

This sequence belongs to the CobB/CobQ family. CobQ subfamily.

The protein operates within cofactor biosynthesis; adenosylcobalamin biosynthesis. Functionally, catalyzes amidations at positions B, D, E, and G on adenosylcobyrinic A,C-diamide. NH(2) groups are provided by glutamine, and one molecule of ATP is hydrogenolyzed for each amidation. This chain is Cobyric acid synthase, found in Chlorobium phaeobacteroides (strain BS1).